We begin with the raw amino-acid sequence, 138 residues long: Large ribosomal subunit protein uL16 (138 aa).

The protein belongs to the universal ribosomal protein uL16 family. As to quaternary structure, part of the 50S ribosomal subunit.

In terms of biological role, binds 23S rRNA and is also seen to make contacts with the A and possibly P site tRNAs. The protein is Large ribosomal subunit protein uL16 of Corynebacterium kroppenstedtii (strain DSM 44385 / JCM 11950 / CIP 105744 / CCUG 35717).